A 560-amino-acid chain; its full sequence is Formate--tetrahydrofolate ligase (560 aa).

Residue 69–76 (TPAGEGKS) coordinates ATP.

This sequence belongs to the formate--tetrahydrofolate ligase family.

The enzyme catalyses (6S)-5,6,7,8-tetrahydrofolate + formate + ATP = (6R)-10-formyltetrahydrofolate + ADP + phosphate. It functions in the pathway one-carbon metabolism; tetrahydrofolate interconversion. The chain is Formate--tetrahydrofolate ligase from Listeria monocytogenes serotype 4b (strain CLIP80459).